The following is a 271-amino-acid chain: MSIKKTKPITSSQRFKVINTFKEITKKNPEKTLSIGKKKTGGRNNSGKITIRYLGGGHKKKYRIIDYKRNKFGIPAIIKHIEYDPNRSCLIYLLFYIDGEKRYIPSINGLNIGNKILSDKKTTTELGNAMYIMNIPLGTIISCVELIPGKGAILARSAGSYAQLIAKSKKFATIKLPSGEKRMVLSTCMATIGSIYNSDHKLEMDGKAGRKRWLGRKPRTRGVAMNPVDHPMGGGEGKSSGGHPRNRNGIPSNGFKTRNKKKITNKYIIKK.

Residues 221–271 (RGVAMNPVDHPMGGGEGKSSGGHPRNRNGIPSNGFKTRNKKKITNKYIIKK) form a disordered region. The span at 257–271 (TRNKKKITNKYIIKK) shows a compositional bias: basic residues.

This sequence belongs to the universal ribosomal protein uL2 family. Part of the 50S ribosomal subunit. Forms a bridge to the 30S subunit in the 70S ribosome.

Its function is as follows. One of the primary rRNA binding proteins. Required for association of the 30S and 50S subunits to form the 70S ribosome, for tRNA binding and peptide bond formation. It has been suggested to have peptidyltransferase activity; this is somewhat controversial. Makes several contacts with the 16S rRNA in the 70S ribosome. This is Large ribosomal subunit protein uL2 from Karelsulcia muelleri (strain GWSS) (Sulcia muelleri).